The following is a 153-amino-acid chain: Large ribosomal subunit protein uL13 (153 aa).

Belongs to the universal ribosomal protein uL13 family. As to quaternary structure, part of the 50S ribosomal subunit.

This protein is one of the early assembly proteins of the 50S ribosomal subunit, although it is not seen to bind rRNA by itself. It is important during the early stages of 50S assembly. The chain is Large ribosomal subunit protein uL13 from Xanthobacter autotrophicus (strain ATCC BAA-1158 / Py2).